A 346-amino-acid chain; its full sequence is uncharacterized protein (346 aa).

A signal peptide spans Met1–Ala27.

This is an uncharacterized protein from Haemophilus influenzae (strain ATCC 51907 / DSM 11121 / KW20 / Rd).